The chain runs to 84 residues: U21-theraphotoxin-Cg1a 1 (84 aa).

A signal peptide spans 1–21 (MKVSVLITLAVLGVMFLLTSA). The propeptide occupies 22–47 (EERGSDQMDSPAWLKSMEIIFQSEER). 3 cysteine pairs are disulfide-bonded: cysteine 49–cysteine 63, cysteine 56–cysteine 68, and cysteine 62–cysteine 76. Valine 82 is subject to Valine amide.

The protein belongs to the neurotoxin 10 (Hwtx-1) family. 05 (F4a) subfamily. Expressed by the venom gland.

The protein localises to the secreted. Its function is as follows. Probable ion channel inhibitor. This Chilobrachys guangxiensis (Chinese earth tiger tarantula) protein is U21-theraphotoxin-Cg1a 1.